Reading from the N-terminus, the 356-residue chain is Alanine racemase (356 aa).

Catalysis depends on Lys35, which acts as the Proton acceptor; specific for D-alanine. The residue at position 35 (Lys35) is an N6-(pyridoxal phosphate)lysine. Position 130 (Arg130) interacts with substrate. Tyr253 (proton acceptor; specific for L-alanine) is an active-site residue. Met301 serves as a coordination point for substrate.

This sequence belongs to the alanine racemase family. Pyridoxal 5'-phosphate serves as cofactor.

It carries out the reaction L-alanine = D-alanine. The protein operates within amino-acid biosynthesis; D-alanine biosynthesis; D-alanine from L-alanine: step 1/1. In terms of biological role, catalyzes the interconversion of L-alanine and D-alanine. May also act on other amino acids. This is Alanine racemase (alr) from Paraburkholderia phytofirmans (strain DSM 17436 / LMG 22146 / PsJN) (Burkholderia phytofirmans).